A 131-amino-acid polypeptide reads, in one-letter code: UPF0146 protein PH0209 (131 aa).

It belongs to the UPF0146 family.

The protein is UPF0146 protein PH0209 of Pyrococcus horikoshii (strain ATCC 700860 / DSM 12428 / JCM 9974 / NBRC 100139 / OT-3).